The sequence spans 356 residues: sn-glycerol-3-phosphate import ATP-binding protein UgpC (356 aa).

The ABC transporter domain maps to Leu-4 to Ile-235. Gly-37–Ser-44 serves as a coordination point for ATP.

It belongs to the ABC transporter superfamily. sn-glycerol-3-phosphate importer (TC 3.A.1.1.3) family. In terms of assembly, the complex is composed of two ATP-binding proteins (UgpC), two transmembrane proteins (UgpA and UgpE) and a solute-binding protein (UgpB).

Its subcellular location is the cell inner membrane. It catalyses the reaction sn-glycerol 3-phosphate(out) + ATP + H2O = sn-glycerol 3-phosphate(in) + ADP + phosphate + H(+). Functionally, part of the ABC transporter complex UgpBAEC involved in sn-glycerol-3-phosphate (G3P) import. Responsible for energy coupling to the transport system. This Salmonella paratyphi A (strain ATCC 9150 / SARB42) protein is sn-glycerol-3-phosphate import ATP-binding protein UgpC.